We begin with the raw amino-acid sequence, 539 residues long: Propionyl-CoA carboxylase beta chain, mitochondrial (539 aa).

A mitochondrion-targeting transit peptide spans M1–L28. A CoA carboxyltransferase N-terminal domain is found at A32 to E290. The carboxyltransferase stretch occupies residues A32 to K533. S71 carries the post-translational modification Phosphoserine. At K99 the chain carries N6-acetyllysine; alternate. K99 carries the post-translational modification N6-succinyllysine; alternate. Residue K248 is modified to N6-succinyllysine. One can recognise a CoA carboxyltransferase C-terminal domain in the interval P294–K533. An acyl-CoA binding region spans residues D325–Q358. Residues K474 and K489 each carry the N6-acetyllysine; alternate modification. K474 and K489 each carry N6-succinyllysine; alternate.

It belongs to the AccD/PCCB family. In terms of assembly, the holoenzyme is a dodecamer composed of 6 PCCA/alpha subunits and 6 PCCB/beta subunits.

It localises to the mitochondrion matrix. The enzyme catalyses propanoyl-CoA + hydrogencarbonate + ATP = (S)-methylmalonyl-CoA + ADP + phosphate + H(+). It catalyses the reaction butanoyl-CoA + hydrogencarbonate + ATP = (2S)-ethylmalonyl-CoA + ADP + phosphate + H(+). It participates in metabolic intermediate metabolism; propanoyl-CoA degradation; succinyl-CoA from propanoyl-CoA: step 1/3. Functionally, this is one of the 2 subunits of the biotin-dependent propionyl-CoA carboxylase (PCC), a mitochondrial enzyme involved in the catabolism of odd chain fatty acids, branched-chain amino acids isoleucine, threonine, methionine, and valine and other metabolites. Propionyl-CoA carboxylase catalyzes the carboxylation of propionyl-CoA/propanoyl-CoA to D-methylmalonyl-CoA/(S)-methylmalonyl-CoA. Within the holoenzyme, the alpha subunit catalyzes the ATP-dependent carboxylation of the biotin carried by the biotin carboxyl carrier (BCC) domain, while the beta subunit then transfers the carboxyl group from carboxylated biotin to propionyl-CoA. Propionyl-CoA carboxylase also significantly acts on butyryl-CoA/butanoyl-CoA, which is converted to ethylmalonyl-CoA/(2S)-ethylmalonyl-CoA at a much lower rate. Other alternative minor substrates include (2E)-butenoyl-CoA/crotonoyl-CoA. The sequence is that of Propionyl-CoA carboxylase beta chain, mitochondrial from Homo sapiens (Human).